We begin with the raw amino-acid sequence, 710 residues long: Protein phosphatase 1 regulatory subunit 37 (710 aa).

Residues 1 to 12 (MEIPPQEAPPGP) show a composition bias toward pro residues. The interval 1 to 46 (MEIPPQEAPPGPGADADADAEAEEAPAEAGSSSGASPPTDGRLKAA) is disordered. Positions 16–26 (ADADAEAEEAP) are enriched in acidic residues. Positions 27-38 (AEAGSSSGASPP) are enriched in low complexity. Residues S54 and S60 each carry the phosphoserine modification. 5 LRR repeats span residues 224–244 (SLAV…MLLA), 252–273 (NLQE…AQLG), 281–301 (SLQI…AYIC), 310–330 (GLVT…AFLG), and 338–358 (SLET…RNLK). The interval 487–677 (PLEESGDLPA…APPGLEAKGS (191 aa)) is disordered. The span at 512–531 (SDSDSDSDREEQEEEEEDQS) shows a compositional bias: acidic residues. Residues 543-565 (SSSAPCPALLPSTDSLGPGDKSP) show a composition bias toward low complexity. At S581 the chain carries Phosphoserine. Over residues 603–624 (PPVPPTSVSSPPPSPPSPPASP) the composition is skewed to pro residues. Residues 637–649 (SEAQPQTEPSQAG) show a composition bias toward polar residues. Positions 656–676 (LKPEFALALAPEAPPGLEAKG) are enriched in low complexity.

This sequence belongs to the PPP1R37 family. Interacts with PPP1CA.

Functionally, inhibits phosphatase activity of protein phosphatase 1 (PP1) complexes. The chain is Protein phosphatase 1 regulatory subunit 37 (Ppp1r37) from Rattus norvegicus (Rat).